A 448-amino-acid chain; its full sequence is NADP-specific glutamate dehydrogenase (448 aa).

Residues lysine 88, glutamine 109, and lysine 112 each coordinate substrate. Lysine 124 (proton donor) is an active-site residue. Glycine 163 provides a ligand contact to substrate. NADP(+) is bound by residues threonine 207 and asparagine 238. Substrate is bound at residue serine 381.

This sequence belongs to the Glu/Leu/Phe/Val dehydrogenases family. In terms of assembly, homohexamer.

It carries out the reaction L-glutamate + NADP(+) + H2O = 2-oxoglutarate + NH4(+) + NADPH + H(+). Functionally, catalyzes the reversible oxidative deamination of glutamate to alpha-ketoglutarate and ammonia. The chain is NADP-specific glutamate dehydrogenase (gdhA) from Helicobacter pylori (strain ATCC 700392 / 26695) (Campylobacter pylori).